Consider the following 310-residue polypeptide: Olfactory receptor 2A4 (310 aa).

Topologically, residues 1–24 are extracellular; that stretch reads MGDNITSIREFLLLGFPVGPRIQM. A glycan (N-linked (GlcNAc...) asparagine) is linked at N4. The chain crosses the membrane as a helical span at residues 25-48; that stretch reads LLFGLFSLFYVFTLLGNGTILGLI. Topologically, residues 49 to 56 are cytoplasmic; the sequence is SLDSRLHA. A helical membrane pass occupies residues 57-78; that stretch reads PMYFFLSHLAVVDIAYACNTVP. Residues 79–99 are Extracellular-facing; sequence RMLVNLLHPAKPISFAGRMMQ. A helical transmembrane segment spans residues 100–119; that stretch reads TFLFSTFAVTECLLLVVMSY. Topologically, residues 120 to 138 are cytoplasmic; that stretch reads DLYVAICHPLRYLAIMTWR. The helical transmembrane segment at 139-157 threads the bilayer; the sequence is VCITLAVTSWTTGVLLSLI. Over 158 to 194 the chain is Extracellular; sequence HLVLLLPLPFCRPQKIYHFFCEILAVLKLACADTHIN. A helical membrane pass occupies residues 195-218; that stretch reads ENMVLAGAISGLVGPLSTIVVSYM. The Cytoplasmic portion of the chain corresponds to 219–235; it reads CILCAILQIQSREVQRK. Residues 236–258 traverse the membrane as a helical segment; it reads AFRTCFSHLCVIGLVYGTAIIMY. At 259–271 the chain is on the extracellular side; that stretch reads VGPRYGNPKEQKK. A helical transmembrane segment spans residues 272–291; it reads YLLLFHSLFNPMLNPLICSL. Over 292 to 310 the chain is Cytoplasmic; it reads RNSEVKNTLKRVLGVERAL.

The protein belongs to the G-protein coupled receptor 1 family.

It localises to the cell membrane. Functionally, odorant receptor. The chain is Olfactory receptor 2A4 (OR2A4) from Homo sapiens (Human).